We begin with the raw amino-acid sequence, 475 residues long: MAGKTLYDKLWEMHEVKRRDDGSSLIYIDRHILHEVTSPQAFEGLRLANRKPWRIDANIATPDHNVPTTKGERQGGLEAIADEVSRIQVQTLDENCDDFGILEFKMNDVRQGIVHVIGPEQGATLPGMTVVCGDSHTSTHGAFGALAHGIGTSEVEHVLATQCLVAKKMKNMQVRVEGKLPFGVTAKDIVLAVIGKIGTAGGNGHALEFAGSAIRDLSMEGRMTICNMAIEAGARVGMVAVDEKTIAYVEGRPYAPKGADWDKAVKLWQDLVSDDDAVFDTIVELKAEDIKPQVSWGTSPEMVLAVDQNVPDPAVEADPVKKDSITRALKYMGLQANQAITDIRLDRVFIGSCTNSRIEDLRAAAEVAKGRKVAANVKQALVVPGSGLVKQQAEAEGLDKIFIEAGFEWREPGCSMCLAMNPDKLGSGEHCASTSNRNFEGRQGAGGRTHLVSPAMAAAAAVTGHFIDVRELIQA.

The [4Fe-4S] cluster site is built by Cys353, Cys414, and Cys417.

It belongs to the aconitase/IPM isomerase family. LeuC type 1 subfamily. As to quaternary structure, heterodimer of LeuC and LeuD. It depends on [4Fe-4S] cluster as a cofactor.

It carries out the reaction (2R,3S)-3-isopropylmalate = (2S)-2-isopropylmalate. It functions in the pathway amino-acid biosynthesis; L-leucine biosynthesis; L-leucine from 3-methyl-2-oxobutanoate: step 2/4. In terms of biological role, catalyzes the isomerization between 2-isopropylmalate and 3-isopropylmalate, via the formation of 2-isopropylmaleate. This chain is 3-isopropylmalate dehydratase large subunit, found in Stutzerimonas stutzeri (strain A1501) (Pseudomonas stutzeri).